We begin with the raw amino-acid sequence, 672 residues long: uncharacterized protein (672 aa).

Basic and acidic residues predominate over residues 1-10 (MAKSDGDDPL). The interval 1 to 40 (MAKSDGDDPLRPASPRLRSSRRHSLRYSAYTGGPDPLAPP) is disordered.

This is an uncharacterized protein from Mycobacterium tuberculosis (strain CDC 1551 / Oshkosh).